A 231-amino-acid chain; its full sequence is Biosynthetic peptidoglycan transglycosylase (231 aa).

A helical membrane pass occupies residues 7–27 (LLFWLIVVPVLLVLLLQLYFF).

This sequence belongs to the glycosyltransferase 51 family.

The protein resides in the cell inner membrane. It carries out the reaction [GlcNAc-(1-&gt;4)-Mur2Ac(oyl-L-Ala-gamma-D-Glu-L-Lys-D-Ala-D-Ala)](n)-di-trans,octa-cis-undecaprenyl diphosphate + beta-D-GlcNAc-(1-&gt;4)-Mur2Ac(oyl-L-Ala-gamma-D-Glu-L-Lys-D-Ala-D-Ala)-di-trans,octa-cis-undecaprenyl diphosphate = [GlcNAc-(1-&gt;4)-Mur2Ac(oyl-L-Ala-gamma-D-Glu-L-Lys-D-Ala-D-Ala)](n+1)-di-trans,octa-cis-undecaprenyl diphosphate + di-trans,octa-cis-undecaprenyl diphosphate + H(+). Its pathway is cell wall biogenesis; peptidoglycan biosynthesis. Functionally, peptidoglycan polymerase that catalyzes glycan chain elongation from lipid-linked precursors. The sequence is that of Biosynthetic peptidoglycan transglycosylase from Janthinobacterium sp. (strain Marseille) (Minibacterium massiliensis).